A 64-amino-acid chain; its full sequence is Large ribosomal subunit protein bL33 (64 aa).

This sequence belongs to the bacterial ribosomal protein bL33 family.

This Synechococcus sp. (strain WH7803) protein is Large ribosomal subunit protein bL33.